Consider the following 277-residue polypeptide: Pantothenate synthetase (277 aa).

26-33 (MGNLHEGH) contributes to the ATP binding site. His33 functions as the Proton donor in the catalytic mechanism. Gln57 is a (R)-pantoate binding site. Beta-alanine is bound at residue Gln57. 144-147 (GKKD) contributes to the ATP binding site. Gln150 is a binding site for (R)-pantoate. Residues Gly173 and 181-184 (LSSR) contribute to the ATP site.

Belongs to the pantothenate synthetase family. Homodimer.

The protein resides in the cytoplasm. The enzyme catalyses (R)-pantoate + beta-alanine + ATP = (R)-pantothenate + AMP + diphosphate + H(+). The protein operates within cofactor biosynthesis; (R)-pantothenate biosynthesis; (R)-pantothenate from (R)-pantoate and beta-alanine: step 1/1. In terms of biological role, catalyzes the condensation of pantoate with beta-alanine in an ATP-dependent reaction via a pantoyl-adenylate intermediate. In Chromobacterium violaceum (strain ATCC 12472 / DSM 30191 / JCM 1249 / CCUG 213 / NBRC 12614 / NCIMB 9131 / NCTC 9757 / MK), this protein is Pantothenate synthetase.